We begin with the raw amino-acid sequence, 351 residues long: MTKISKIIDELNNQQADAAWITTPLNVYYFTGYRSEPHERLFALLIKKDGKQVLFCPKMEVEEVKASPFTGEIVGYLDTENPFSLYPQTINKLLIESEHLTVARQKQLISGFNVNSFGDVDLTIKQLRNIKSEDEISKIRKAAELADKCIEIGVSYLKEGVTECEVVNHIEQTIKQYGVNEMSFDTMVLFGDHAASPHGTPGDRRLKSNEYVLFDLGVIYEHYCSDMTRTIKFGEPSKEAQEIYNIVLEAETSAIQAIKPGIPLKDIDHIARNIISEKGYGEYFPHRLGHGLGLQEHEYQDVSSTNSNLLEAGMVITIEPGIYVPGVAGVRIEDDILVTNEGYEVLTHYEK.

The Mn(2+) site is built by Asp-215, Asp-226, His-290, Glu-319, and Glu-333.

Belongs to the peptidase M24B family. Requires Mn(2+) as cofactor.

This is an uncharacterized protein from Staphylococcus aureus (strain USA300).